The following is a 676-amino-acid chain: Methionine--tRNA ligase (676 aa).

Residues 15–25 (PYANGSIHLGH) carry the 'HIGH' region motif. Zn(2+) contacts are provided by Cys-146, Cys-149, Cys-159, and Cys-162. The 'KMSKS' region signature appears at 332-336 (KMSKS). Lys-335 contributes to the ATP binding site. The region spanning 574 to 676 (DFAKVDMRIA…SGAQPGQQVK (103 aa)) is the tRNA-binding domain.

This sequence belongs to the class-I aminoacyl-tRNA synthetase family. MetG type 1 subfamily. Homodimer. Zn(2+) is required as a cofactor.

The protein resides in the cytoplasm. It catalyses the reaction tRNA(Met) + L-methionine + ATP = L-methionyl-tRNA(Met) + AMP + diphosphate. Is required not only for elongation of protein synthesis but also for the initiation of all mRNA translation through initiator tRNA(fMet) aminoacylation. This is Methionine--tRNA ligase from Erwinia tasmaniensis (strain DSM 17950 / CFBP 7177 / CIP 109463 / NCPPB 4357 / Et1/99).